Consider the following 574-residue polypeptide: Aspartate--tRNA ligase (574 aa).

Glutamate 169 lines the L-aspartate pocket. Residues 193-196 form an aspartate region; the sequence is QLFK. Residue arginine 215 participates in L-aspartate binding. Residues 215 to 217 and glutamine 224 contribute to the ATP site; that span reads RDE. Histidine 437 serves as a coordination point for L-aspartate. Glutamate 471 is a binding site for ATP. Arginine 478 is a binding site for L-aspartate. 523–526 is an ATP binding site; it reads GLDR.

It belongs to the class-II aminoacyl-tRNA synthetase family. Type 1 subfamily. Homodimer.

It localises to the cytoplasm. It carries out the reaction tRNA(Asp) + L-aspartate + ATP = L-aspartyl-tRNA(Asp) + AMP + diphosphate. Catalyzes the attachment of L-aspartate to tRNA(Asp) in a two-step reaction: L-aspartate is first activated by ATP to form Asp-AMP and then transferred to the acceptor end of tRNA(Asp). The protein is Aspartate--tRNA ligase of Mycoplasma mycoides subsp. mycoides SC (strain CCUG 32753 / NCTC 10114 / PG1).